The following is a 78-amino-acid chain: Acyl carrier protein (78 aa).

Positions 2–77 constitute a Carrier domain; sequence SDTAERIKKI…DAVSYIDEHK (76 aa). Ser37 bears the O-(pantetheine 4'-phosphoryl)serine mark.

It belongs to the acyl carrier protein (ACP) family. 4'-phosphopantetheine is transferred from CoA to a specific serine of apo-ACP by AcpS. This modification is essential for activity because fatty acids are bound in thioester linkage to the sulfhydryl of the prosthetic group.

It localises to the cytoplasm. The protein operates within lipid metabolism; fatty acid biosynthesis. In terms of biological role, carrier of the growing fatty acid chain in fatty acid biosynthesis. This chain is Acyl carrier protein, found in Zymomonas mobilis subsp. mobilis (strain ATCC 31821 / ZM4 / CP4).